A 128-amino-acid chain; its full sequence is Large ribosomal subunit protein bL17 (128 aa).

This sequence belongs to the bacterial ribosomal protein bL17 family. As to quaternary structure, part of the 50S ribosomal subunit. Contacts protein L32.

In Streptococcus gordonii (strain Challis / ATCC 35105 / BCRC 15272 / CH1 / DL1 / V288), this protein is Large ribosomal subunit protein bL17.